The sequence spans 107 residues: Large ribosomal subunit protein eL21 (107 aa).

The protein belongs to the eukaryotic ribosomal protein eL21 family.

The polypeptide is Large ribosomal subunit protein eL21 (rpl21e) (Aeropyrum pernix (strain ATCC 700893 / DSM 11879 / JCM 9820 / NBRC 100138 / K1)).